A 591-amino-acid polypeptide reads, in one-letter code: uncharacterized protein (591 aa).

The segment covering 1–10 (MSIRGVGGNG) has biased composition (gly residues). 4 disordered regions span residues 1-37 (MSIRGVGGNGNSRIPSHNGDGSNRRSQNTKGNNKVED), 110-135 (RSSATRAAESGSSSRTARGASSGYRE), 324-344 (EESGWTRESASRMEGDEAQGP), and 487-517 (GHYQDPRASDYDLPRASDYDLPRSPYPTPPL). Positions 11–32 (NSRIPSHNGDGSNRRSQNTKGN) are enriched in polar residues. Residues 110-132 (RSSATRAAESGSSSRTARGASSG) are compositionally biased toward low complexity. Over residues 490–507 (QDPRASDYDLPRASDYDL) the composition is skewed to basic and acidic residues.

To C.muridarum TC_0268.

This is an uncharacterized protein from Chlamydia trachomatis serovar D (strain ATCC VR-885 / DSM 19411 / UW-3/Cx).